Reading from the N-terminus, the 548-residue chain is MYFPFLGRLSITDYIIVVLVYIESIISSVLKLIPQPMINLFEWLINFSTSSDDNTIEEKLRSAPTIHEMCAIFDISVEDHLVRTEDNYILTLHRIPPISKNRFNNKVVYLHHGLLMCSDVWCCNIERHKNLPFVLHDLGYDVWMGNNRGNKYSTAHLNKPPKSNKFWDFSIDEFAFFDIPNSIEFILDITKVDKVICIGFSQGSAQMFAAFSLSEKLNRKVSHFIAIAPAMTPKGLHNRIVDTLAKSSPGFMYLFFGRKIVLPSAVIWQRTLHPTLFNLCIDIANKILFNWKSFNILPRQKIASYAKLYSTTSVKSIVHWFQILRSQKFQMFEESDNMLNSLTRPYQIANFPTRTNIKIPILLIYGGIDSLVDIDVMKKNLPFNSVFDVKVDNYEHLDLIWGKDADTLVIAKVLRFIEFFNPGNVSVKTNQLLPSASLVEELPSTTWKTTHPTHGLSYRTHSADRSPLSVQADEADEVHNADNSRFLRRVFSTSAIDEDNENEHQDDTEDQIHKEQQRRLSAYLESSKDLRQLDANSSTTALDALNKE.

Residue Met1 is modified to N-acetylmethionine; partial. Residues Met1 to Asp13 lie on the Lumenal side of the membrane. The chain crosses the membrane as a helical span at residues Tyr14–Pro34. Residues Gln35–Glu548 are Cytoplasmic-facing. The region spanning Val107 to Gly402 is the AB hydrolase-1 domain. The GXSXG signature appears at Gly199 to Gly203. The Nucleophile role is filled by Ser201. Lys246 participates in a covalent cross-link: Glycyl lysine isopeptide (Lys-Gly) (interchain with G-Cter in ubiquitin). Catalysis depends on charge relay system residues Asp369 and His396. 2 disordered regions span residues Thr449–Glu477 and Ile496–Gln516. 2 positions are modified to phosphoserine: Ser462 and Ser466. Over residues Asn502–Gln516 the composition is skewed to basic and acidic residues. Ser521 and Ser538 each carry phosphoserine. The segment at Lys528 to Glu548 is disordered. Thr539 is subject to Phosphothreonine.

The protein belongs to the AB hydrolase superfamily. Post-translationally, not N-glycosylated.

Its subcellular location is the lipid droplet. It localises to the membrane. The catalysed reaction is a sterol ester + H2O = a sterol + a fatty acid + H(+). In terms of biological role, mediates the hydrolysis of steryl esters (SE). Preferentially hydrolyzes ergosteryl and zymosteryl esters. Required for mobilization of SEs from lipid particles/droplets, thereby playing a central role in lipid metabolism and sterol homeostasis. Sterol intermediates stored in SE and set free by SE hydrolases are recycled to the sterol biosynthetic pathway and converted to the final product, ergosterol, in the endoplasmic reticulum. Also has weak lipase activity toward triglycerides at neutral pH, however, the physiological relevance of this activity is unclear. The protein is Sterol esterase TGL1 (TGL1) of Saccharomyces cerevisiae (strain ATCC 204508 / S288c) (Baker's yeast).